The primary structure comprises 238 residues: MLIIPAVDMKNKKCVQLIQGNPDKKHVELDNPPEIAKKWVEQGAEMLHLVDLDGAINGKRVNDEFIEEIIKNSGVPVQIGGGIRSVSDALYFIEKGAEKVILGTVAIQNPKIVREISSIVGKEKVTVALDAKDGKVLIKGWTEKTDYSPVQIGKILENMGAGSILFTNVDSEGLLEGINVLPTKELVDNLNIPIIASGGVTTVEDLLKFKEIGVYAVVVGSALYKDMINLKDAILASK.

D8 functions as the Proton acceptor in the catalytic mechanism. D130 (proton donor) is an active-site residue.

The protein belongs to the HisA/HisF family.

Its subcellular location is the cytoplasm. The enzyme catalyses 1-(5-phospho-beta-D-ribosyl)-5-[(5-phospho-beta-D-ribosylamino)methylideneamino]imidazole-4-carboxamide = 5-[(5-phospho-1-deoxy-D-ribulos-1-ylimino)methylamino]-1-(5-phospho-beta-D-ribosyl)imidazole-4-carboxamide. Its pathway is amino-acid biosynthesis; L-histidine biosynthesis; L-histidine from 5-phospho-alpha-D-ribose 1-diphosphate: step 4/9. This is 1-(5-phosphoribosyl)-5-[(5-phosphoribosylamino)methylideneamino] imidazole-4-carboxamide isomerase from Methanococcus vannielii (strain ATCC 35089 / DSM 1224 / JCM 13029 / OCM 148 / SB).